The chain runs to 361 residues: Glutamate 5-kinase (361 aa).

K7 contributes to the ATP binding site. S47, D134, and N146 together coordinate substrate. Residues 166 to 167 (TD) and 209 to 215 (TGGMTTK) contribute to the ATP site. The PUA domain occupies 274 to 345 (LGTLQLDEGA…EAIETQMSTN (72 aa)).

It belongs to the glutamate 5-kinase family.

Its subcellular location is the cytoplasm. The catalysed reaction is L-glutamate + ATP = L-glutamyl 5-phosphate + ADP. The protein operates within amino-acid biosynthesis; L-proline biosynthesis; L-glutamate 5-semialdehyde from L-glutamate: step 1/2. Its function is as follows. Catalyzes the transfer of a phosphate group to glutamate to form L-glutamate 5-phosphate. The protein is Glutamate 5-kinase of Prochlorococcus marinus (strain MIT 9313).